The primary structure comprises 701 residues: Glycine--tRNA ligase beta subunit (701 aa).

Belongs to the class-II aminoacyl-tRNA synthetase family. Tetramer of two alpha and two beta subunits.

The protein resides in the cytoplasm. The enzyme catalyses tRNA(Gly) + glycine + ATP = glycyl-tRNA(Gly) + AMP + diphosphate. The chain is Glycine--tRNA ligase beta subunit from Bradyrhizobium sp. (strain BTAi1 / ATCC BAA-1182).